Reading from the N-terminus, the 223-residue chain is Ribosomal RNA small subunit methyltransferase Nep1 (223 aa).

Residues Gly-181, Gly-186, and 199–204 (LYREPL) each bind S-adenosyl-L-methionine.

The protein belongs to the class IV-like SAM-binding methyltransferase superfamily. RNA methyltransferase NEP1 family. As to quaternary structure, homodimer.

The enzyme catalyses a pseudouridine in rRNA + S-adenosyl-L-methionine = an N(1)-methylpseudouridine in rRNA + S-adenosyl-L-homocysteine + H(+). Functionally, methyltransferase involved in ribosomal biogenesis. Specifically catalyzes the N1-methylation of the pseudouridine corresponding to position 914 in M.jannaschii 16S rRNA. The chain is Ribosomal RNA small subunit methyltransferase Nep1 from Pyrococcus furiosus (strain ATCC 43587 / DSM 3638 / JCM 8422 / Vc1).